We begin with the raw amino-acid sequence, 833 residues long: EF-hand domain-containing family member B (833 aa).

2 EF-hand domains span residues 561 to 596 (QKFDTLLAAFRHYDKKGDGMIDKDELQEACDQANLS) and 597 to 632 (LDDKLLDQLFDYCDVDNDGFINYLEFANFLNWKDKM). 8 residues coordinate Ca(2+): D574, D578, M580, E585, D610, D612, D614, and E621.

As to quaternary structure, microtubule inner protein component of sperm flagellar doublet microtubules. Interacts with STIM1 and ORAI1; the interactions take place upon Ca(2+)-store depletion and dissociate through a Ca(2+)-dependent mechanism. Interaction with STIM1 inhibits STIM1 interaction with SARAF. As to expression, expressed in airway epithelial cells.

It is found in the cytoplasm. It localises to the cytoskeleton. The protein localises to the cilium axoneme. The protein resides in the flagellum axoneme. Microtubule inner protein (MIP) part of the dynein-decorated doublet microtubules (DMTs) in cilia axoneme, which is required for motile cilia beating. Cytosolic sensor for calcium, modulates the interaction of STIM1 and ORAI1 upon store depletion and the activation of store-operated Ca(2+) entry (SOCE) and NFAT translocation from cytosol to nucleus. In Homo sapiens (Human), this protein is EF-hand domain-containing family member B.